The primary structure comprises 138 residues: Basic phospholipase A2 homolog MjTX-I (138 aa).

Positions 1 to 16 (MRTLWIMAVLLVGVEG) are cleaved as a signal peptide. Residue valine 34 coordinates suramin. 7 disulfide bridges follow: cysteine 42–cysteine 132, cysteine 44–cysteine 60, cysteine 59–cysteine 111, cysteine 65–cysteine 138, cysteine 66–cysteine 104, cysteine 73–cysteine 97, and cysteine 91–cysteine 102. Asparagine 43 serves as a coordination point for varespladib. Glycine 45 and glycine 48 together coordinate suramin. 2 residues coordinate varespladib: histidine 63 and lysine 64. Residue lysine 85 coordinates suramin.

This sequence belongs to the phospholipase A2 family. Group II subfamily. K49 sub-subfamily. Monomer in solution. Homodimer; non-covalently linked (probable conventional/extended dimer conformation). Homotetramer (dimer of homodimer (probable conventional/extended dimer conformation)); non-covalently linked. Homooligomer. As to expression, expressed by the venom gland.

The protein resides in the secreted. Myotoxin activity is inhibited by suramin and varespladib. Inhibition by suramin may be caused by (i) distortion of MDiS from both monomers impairing the membrane disruption mechanism by the toxin and (ii) surface electrostatic changes of the complex that interfere with the toxin membrane dockage process (putative-MDoS is partially hidden). Inhibition by varespladib is probably through varespladib binding to MDoS. Snake venom phospholipase A2 homolog that lacks enzymatic activity. In vivo, it displays local myotoxin and edema-inducing activities and is lethal by intraperitoneal injection. The myotoxicity effect is weaker in comparison to other myotoxins, probably due to the formation of high molecular weight complexes and to the oligomeric conformation (conventional dimer). It shows specificity toward neurons and myotubes, but not on a variety of other cell types. This PLA2 excites a cohort of sensory neurons via ATP release and consequent activation of P2RX2 and/or P2RX3 purinergic receptors. Pannexin hemichannels act as downstream mediators of toxin-evoked ATP release. In vivo, it elicits nonneurogenic inflammatory pain, thermal hyperalgesia, and mechanical allodynia, of which the latter is completely dependent on purinergic signaling. The sequence is that of Basic phospholipase A2 homolog MjTX-I from Bothrops moojeni (Lance-headed viper).